Reading from the N-terminus, the 129-residue chain is Virion-associated protein (129 aa).

Coiled-coil stretches lie at residues 1 to 31 (MANL…ILEL) and 38 to 59 (IKES…LIND). The tract at residues 122 to 129 (PAGWPNQF) is capsid binding.

The protein belongs to the caulimovirus ORF III family. As to quaternary structure, homotetramer, through coiled-coil domain. Homotrimer when bound on icosehadral capsid. Interacts with capsid protein, and with movement protein.

The protein resides in the virion. Its subcellular location is the host cell junction. It localises to the host plasmodesma. Plays a role in virus cell-to-cell and plant-to-plant transmission. Interacts with virion icosahedral capsid and movement protein, thereby facilitating virion cell-to-cell transmission through plasmodesmata opened by viral movement protein. Also interacts with aphid transmission factor, attaching the virion to aphid stylet when the animal feeds on an virus infected plant. Aphid saliva may later detach the virion, inducing release of infectious particles when the animal feeds on a new plant. This chain is Virion-associated protein, found in Cauliflower mosaic virus (strain Strasbourg) (CaMV).